An 819-amino-acid chain; its full sequence is Aminopeptidase O (819 aa).

Histidine 479 is a Zn(2+) binding site. The Proton acceptor role is filled by glutamate 480. Positions 483 and 502 each coordinate Zn(2+). Residues 689–699 (RRPRKRKRREK) carry the Nucleolar localization signal motif.

Belongs to the peptidase M1 family. It depends on Zn(2+) as a cofactor.

Its subcellular location is the nucleus. The protein resides in the nucleolus. It is found in the cytoplasm. Functionally, aminopeptidase which catalyzes the hydrolysis of amino acid residues from the N-terminus of peptide or protein substrates. This Homo sapiens (Human) protein is Aminopeptidase O.